A 339-amino-acid polypeptide reads, in one-letter code: Glycerol-3-phosphate dehydrogenase [NAD(P)+] (339 aa).

Residues Ser14, Tyr15, His35, and Lys109 each contribute to the NADPH site. Lys109, Gly138, and Thr140 together coordinate sn-glycerol 3-phosphate. Ala142 provides a ligand contact to NADPH. Sn-glycerol 3-phosphate is bound by residues Lys194, Asp247, Ser257, Arg258, and Asn259. Catalysis depends on Lys194, which acts as the Proton acceptor. Arg258 lines the NADPH pocket. NADPH-binding residues include Val282 and Glu284.

This sequence belongs to the NAD-dependent glycerol-3-phosphate dehydrogenase family.

Its subcellular location is the cytoplasm. It carries out the reaction sn-glycerol 3-phosphate + NAD(+) = dihydroxyacetone phosphate + NADH + H(+). The catalysed reaction is sn-glycerol 3-phosphate + NADP(+) = dihydroxyacetone phosphate + NADPH + H(+). It functions in the pathway membrane lipid metabolism; glycerophospholipid metabolism. Its function is as follows. Catalyzes the reduction of the glycolytic intermediate dihydroxyacetone phosphate (DHAP) to sn-glycerol 3-phosphate (G3P), the key precursor for phospholipid synthesis. The protein is Glycerol-3-phosphate dehydrogenase [NAD(P)+] of Shewanella pealeana (strain ATCC 700345 / ANG-SQ1).